We begin with the raw amino-acid sequence, 1396 residues long: Major capsid protein (1396 aa).

This sequence belongs to the herpesviridae major capsid protein family. Homomultimer. Makes the hexons and eleven out of twelve pentons. Interacts with triplex proteins 1/TRX1 and 2/TRX2; adjacent capsomers are linked together in groups of three by triplexes, heterotrimeric complexes composed of one molecule of TRX1 and two molecules of TRX2. Interacts with scaffold protein; this interaction allows efficient MCP transport to the host nucleus. Interacts with capsid vertex component 2/CVC2. Interacts with the small capsomere-interacting protein/SCP.

The protein resides in the virion. It is found in the host nucleus. Functionally, self-assembles to form an icosahedral capsid with a T=16 symmetry, about 200 nm in diameter, and consisting of 150 hexons and 12 pentons (total of 162 capsomers). Hexons form the edges and faces of the capsid and are each composed of six MCP molecules. In contrast, one penton is found at each of the 12 vertices. Eleven of the pentons are MCP pentamers, while the last vertex is occupied by the portal complex. The capsid is surrounded by a layer of proteinaceous material designated the tegument which, in turn, is enclosed in an envelope of host cell-derived lipids containing virus-encoded glycoproteins. This Varicella-zoster virus (strain Dumas) (HHV-3) protein is Major capsid protein.